The primary structure comprises 295 residues: Light-independent protochlorophyllide reductase iron-sulfur ATP-binding protein (295 aa).

Residues 39–44 and lysine 68 each bind ATP; that span reads GIGKST. Serine 43 contacts Mg(2+). Cysteine 124 and cysteine 158 together coordinate [4Fe-4S] cluster. ATP contacts are provided by residues 209-210 and 233-235; these read NR and PDL.

The protein belongs to the NifH/BchL/ChlL family. As to quaternary structure, homodimer. Protochlorophyllide reductase is composed of three subunits; BchL, BchN and BchB. [4Fe-4S] cluster serves as cofactor.

The catalysed reaction is chlorophyllide a + oxidized 2[4Fe-4S]-[ferredoxin] + 2 ADP + 2 phosphate = protochlorophyllide a + reduced 2[4Fe-4S]-[ferredoxin] + 2 ATP + 2 H2O. It participates in porphyrin-containing compound metabolism; bacteriochlorophyll biosynthesis (light-independent). In terms of biological role, component of the dark-operative protochlorophyllide reductase (DPOR) that uses Mg-ATP and reduced ferredoxin to reduce ring D of protochlorophyllide (Pchlide) to form chlorophyllide a (Chlide). This reaction is light-independent. The L component serves as a unique electron donor to the NB-component of the complex, and binds Mg-ATP. The polypeptide is Light-independent protochlorophyllide reductase iron-sulfur ATP-binding protein (Rhodospirillum rubrum (strain ATCC 11170 / ATH 1.1.1 / DSM 467 / LMG 4362 / NCIMB 8255 / S1)).